The chain runs to 400 residues: Probable succinyl-diaminopimelate desuccinylase (400 aa).

His72 provides a ligand contact to Zn(2+). The active site involves Asp74. A Zn(2+)-binding site is contributed by Asp105. Catalysis depends on Glu139, which acts as the Proton acceptor. Zn(2+)-binding residues include Glu140, Glu165, and His378.

Belongs to the peptidase M20A family. The cofactor is Zn(2+). Co(2+) is required as a cofactor.

It catalyses the reaction N-succinyl-(2S,6S)-2,6-diaminopimelate + H2O = (2S,6S)-2,6-diaminopimelate + succinate. It functions in the pathway amino-acid biosynthesis; L-lysine biosynthesis via DAP pathway; LL-2,6-diaminopimelate from (S)-tetrahydrodipicolinate (succinylase route): step 3/3. This Staphylococcus aureus (strain Mu50 / ATCC 700699) protein is Probable succinyl-diaminopimelate desuccinylase (dapE).